The chain runs to 115 residues: MKFRVDDEVIVIAGADKGHRGKILKVDRDKDKVVVEGAARVWKHVRQSQKNPQGGRLNKEMPMSASNVMLVDPSTGKPTRIGVRYLEDGSKERFAKASGESLGQIAPAKASKAAS.

Disordered stretches follow at residues 45-77 (VRQSQKNPQGGRLNKEMPMSASNVMLVDPSTGK) and 96-115 (KASGESLGQIAPAKASKAAS).

The protein belongs to the universal ribosomal protein uL24 family. In terms of assembly, part of the 50S ribosomal subunit.

Functionally, one of two assembly initiator proteins, it binds directly to the 5'-end of the 23S rRNA, where it nucleates assembly of the 50S subunit. Its function is as follows. One of the proteins that surrounds the polypeptide exit tunnel on the outside of the subunit. The sequence is that of Large ribosomal subunit protein uL24 from Rhodopirellula baltica (strain DSM 10527 / NCIMB 13988 / SH1).